The sequence spans 115 residues: T cell receptor beta variable 7-7 (115 aa).

A signal peptide spans 1–21 (MGTSLLCWVVLGFLGTDHTGA). The 94-residue stretch at 22–115 (GVSQSPRYKV…SAMYRCASSL (94 aa)) folds into the Ig-like domain. An intrachain disulfide couples cysteine 42 to cysteine 111.

Alpha-beta TR is a heterodimer composed of an alpha and beta chain; disulfide-linked. The alpha-beta TR is associated with the transmembrane signaling CD3 coreceptor proteins to form the TR-CD3 (TcR or TCR). The assembly of alpha-beta TR heterodimers with CD3 occurs in the endoplasmic reticulum where a single alpha-beta TR heterodimer associates with one CD3D-CD3E heterodimer, one CD3G-CD3E heterodimer and one CD247 homodimer forming a stable octameric structure. CD3D-CD3E and CD3G-CD3E heterodimers preferentially associate with TR alpha and TR beta chains, respectively. The association of the CD247 homodimer is the last step of TcR assembly in the endoplasmic reticulum and is required for transport to the cell surface.

The protein localises to the cell membrane. Functionally, v region of the variable domain of T cell receptor (TR) beta chain that participates in the antigen recognition. Alpha-beta T cell receptors are antigen specific receptors which are essential to the immune response and are present on the cell surface of T lymphocytes. Recognize peptide-major histocompatibility (MH) (pMH) complexes that are displayed by antigen presenting cells (APC), a prerequisite for efficient T cell adaptive immunity against pathogens. Binding of alpha-beta TR to pMH complex initiates TR-CD3 clustering on the cell surface and intracellular activation of LCK that phosphorylates the ITAM motifs of CD3G, CD3D, CD3E and CD247 enabling the recruitment of ZAP70. In turn ZAP70 phosphorylates LAT, which recruits numerous signaling molecules to form the LAT signalosome. The LAT signalosome propagates signal branching to three major signaling pathways, the calcium, the mitogen-activated protein kinase (MAPK) kinase and the nuclear factor NF-kappa-B (NF-kB) pathways, leading to the mobilization of transcription factors that are critical for gene expression and essential for T cell growth and differentiation. The T cell repertoire is generated in the thymus, by V-(D)-J rearrangement. This repertoire is then shaped by intrathymic selection events to generate a peripheral T cell pool of self-MH restricted, non-autoaggressive T cells. Post-thymic interaction of alpha-beta TR with the pMH complexes shapes TR structural and functional avidity. This is T cell receptor beta variable 7-7 from Homo sapiens (Human).